Consider the following 1111-residue polypeptide: Atrial natriuretic peptide-converting enzyme (1111 aa).

The Cytoplasmic portion of the chain corresponds to 1–112; that stretch reads MGRVSFNVRV…QKLVTANLLR (112 aa). Positions 93 to 96 match the DDNN motif motif; it reads ADSS. The helical; Signal-anchor for type II membrane protein transmembrane segment at 113–133 threads the bilayer; it reads FLLLVLIPCICALIVLLAILL. At 134 to 1111 the chain is on the extracellular side; that stretch reads SFVGTLKKVY…QTFLQKKSQG (978 aa). The N-linked (GlcNAc...) asparagine glycan is linked to asparagine 147. Residues 199–325 enclose the FZ 1 domain; that stretch reads GNTSTCVNIT…SDASRICFSL (127 aa). Disulfide bonds link cysteine 204–cysteine 264, cysteine 212–cysteine 257, cysteine 248–cysteine 288, cysteine 277–cysteine 322, cysteine 281–cysteine 305, cysteine 335–cysteine 348, cysteine 343–cysteine 361, cysteine 355–cysteine 370, cysteine 372–cysteine 384, cysteine 379–cysteine 397, cysteine 391–cysteine 406, cysteine 408–cysteine 421, cysteine 416–cysteine 434, cysteine 428–cysteine 443, cysteine 445–cysteine 458, cysteine 453–cysteine 471, cysteine 465–cysteine 480, cysteine 521–cysteine 584, cysteine 529–cysteine 577, cysteine 568–cysteine 606, cysteine 595–cysteine 636, cysteine 599–cysteine 623, cysteine 646–cysteine 658, cysteine 653–cysteine 671, cysteine 665–cysteine 680, cysteine 682–cysteine 696, cysteine 690–cysteine 709, cysteine 703–cysteine 718, cysteine 721–cysteine 733, cysteine 728–cysteine 746, and cysteine 740–cysteine 755. A glycan (N-linked (GlcNAc...) asparagine) is linked at asparagine 296. 4 consecutive LDL-receptor class A domains span residues 334 to 371, 371 to 407, 407 to 444, and 444 to 481; these read LCGG…AHCN, NCSE…QNCD, DCNL…VNCS, and SCPS…ENCS. Residue asparagine 409 is glycosylated (N-linked (GlcNAc...) asparagine). Residues 516–639 form the FZ 2 domain; the sequence is SNCSHCEPIT…SSDNQTCLLP (124 aa). N-linked (GlcNAc...) asparagine glycosylation occurs at asparagine 535. LDL-receptor class A domains are found at residues 645-681, 681-719, and 720-756; these read ECSP…ENCG, GCKE…KNCS, and FCQD…WGCV. An SRCR domain is found at 756–851; sequence VTLSKNGNSS…SGSEISLLCT (96 aa). N-linked (GlcNAc...) asparagine glycosylation occurs at asparagine 763. Disulfide bonds link cysteine 855/cysteine 977, cysteine 893/cysteine 909, cysteine 991/cysteine 1056, and cysteine 1020/cysteine 1035. Residues 867 to 1100 enclose the Peptidase S1 domain; it reads ILGGRTSRPG…FVDWIERQIY (234 aa). Active-site charge relay system residues include histidine 908 and aspartate 957. The active-site Charge relay system is serine 1050.

The protein belongs to the peptidase S1 family. N-glycosylated; required for processing and activation. In terms of processing, activated through proteolytic processing by a trypsin-like protease; cleaved into a N-terminal propeptide and an activated corin protease fragment. Atrial natriuretic peptide-converting enzyme, 180 kDa soluble fragment is produced by cleavage by ADAM10. Cleavage by ADAM10 to produce soluble 180 kDa soluble fragment takes place after the transmembrane region and before FZ 1. Post-translationally, a disulfide bond links the activated corin protease fragment and the N-terminal propeptide. The disulfide bond also links the activated corin protease fragment with Atrial natriuretic peptide-converting enzyme, 180 kDa soluble fragment. Specifically expressed in heart. Also detected in kidney, aorta, brain and testis. In kidney, present in epithelial cells, with segmental expression in the proximal tubule, thick ascending limb, connecting tubule, and throughout the collecting duct (at protein level).

The protein resides in the cell membrane. The protein localises to the cytoplasmic vesicle. Its subcellular location is the secreted. Functionally, serine-type endopeptidase involved in atrial natriuretic peptide (NPPA) processing. Converts through proteolytic cleavage the non-functional propeptide NPPA into the active hormone, thereby regulating blood pressure in heart and promoting natriuresis, diuresis and vasodilation. Proteolytic cleavage of pro-NPPA also plays a role in female pregnancy by promoting trophoblast invasion and spiral artery remodeling in uterus. Also acts as a regulator of sodium reabsorption in kidney. May also process pro-NPPB the B-type natriuretic peptide. In Rattus norvegicus (Rat), this protein is Atrial natriuretic peptide-converting enzyme (Corin).